The primary structure comprises 554 residues: Calcium/calmodulin-dependent protein kinase type II delta 2 chain (554 aa).

A Protein kinase domain is found at 13–271; the sequence is YQLFEELGKG…AAEAPKHPWI (259 aa). ATP is bound by residues 19 to 27 and Lys42; that span reads LGKGAFSVV. Asp135 (proton acceptor) is an active-site residue. A Phosphothreonine modification is found at Thr286. Phosphoserine is present on residues Ser314 and Ser318. Disordered stretches follow at residues 324–375 and 392–413; these read PDGV…TIED and WQPSVGRPQNSEPKQAPNSSVQ. Positions 330–340 are enriched in polar residues; it reads NNKTNLASSPK. Thr372 carries the phosphothreonine modification.

It belongs to the protein kinase superfamily. CAMK Ser/Thr protein kinase family. CaMK subfamily. As to quaternary structure, CAMK2 is composed of four different chains: alpha, beta, gamma, and delta. The different isoforms assemble into homo- or heteromultimeric holoenzymes composed of 8 to 12 subunits. In terms of tissue distribution, first detected at 18 hpf. At 24 hpf, expressed in discrete anterior locations and along either side of the midline. At 48 hpf, expression is predominantly in the forebrain, and then accumulates in the forebrain, hindbrain, and retinal epithelium at 72 hpf.

The enzyme catalyses L-seryl-[protein] + ATP = O-phospho-L-seryl-[protein] + ADP + H(+). It catalyses the reaction L-threonyl-[protein] + ATP = O-phospho-L-threonyl-[protein] + ADP + H(+). Its activity is regulated as follows. Autophosphorylation of CAMK2 plays an important role in the regulation of the kinase activity. Its function is as follows. CaM-kinase II (CAMK2) is a prominent kinase in the central nervous system. This chain is Calcium/calmodulin-dependent protein kinase type II delta 2 chain (camk2d2), found in Danio rerio (Zebrafish).